The sequence spans 264 residues: Stage IV sporulation protein FA (264 aa).

The span at 1 to 10 shows a compositional bias: basic and acidic residues; the sequence is MSHRADEIRK. The disordered stretch occupies residues 1–37; that stretch reads MSHRADEIRKRLEKRRKQLSGSKRFSTQTVSEKQKPP. The Mother cell cytoplasmic portion of the chain corresponds to 1 to 72; that stretch reads MSHRADEIRK…GKHPLVKTDS (72 aa). Positions 19–31 are enriched in polar residues; that stretch reads LSGSKRFSTQTVS. A helical transmembrane segment spans residues 73–90; the sequence is IILKCLLSACLVLVSAIA. Over 91–264 the chain is Forespore intermembrane space; that stretch reads YKTNIGPVSQ…IDPIQVISFE (174 aa).

As to quaternary structure, forms a complex with BofA and SpoIVFB localized in the mother-cell membrane surrounding the forespore. May be degraded by FtsH. It is stabilized by an ftsH disruption mutant, and in a probably independent fashion, by overexpression of BofA.

It is found in the forespore outer membrane. Its function is as follows. Implicated in the coupling of mother cell to forespore gene expression. Required for spore formation at 37 degrees Celsius, but not at 30 degrees Celsius. SpoIVFA plays a central role in both maintaining the SpoIVFA/BofA/SpoIVFB complex and anchoring it to the outer forespore membrane. SpoIVFA brings BofA into close proximity to SpoIVFB, allowing BofA to inhibit SpoIVFB. Increased accumulation of SpoIVFA seems to inhibit the activity of SpoIVFB and thus regulates the activation of sigma-K. The sequence is that of Stage IV sporulation protein FA (spoIVFA) from Bacillus subtilis (strain 168).